A 362-amino-acid chain; its full sequence is MNTKKRIFFTGGGTGGHVFPGIAIISKLKELDTNIEFFWLGQKGSMEDNIIKEHEYIKFIAIPSGKLRRYFSLQNFTDVFKVIFGIIKSFFIIKKYKPQIIYATGGFVSSPPIIAASLLRVKSITHEMDLDPGLATKINSKFASKIHISFKESTKYFKNKNVLYTGSPIRKEFSNPNPNIITELTQNTKKPIISIFGGSLGAEVLNKLTLNIKNKIDAYFIHQCGKNLDATRENNYLRSQFFNAEEMASIIKFSNIIISRAGAGAIKEFASAGACVIFIPFVKGSRGDQVRNTKILEEQNACLKIDEENLSESQIIDMIKEILTNKEKFDILKNNIKKFHNQDSSNLIANLLLKDFEDINAS.

Residues 14-16 (TGG), Arg-170, Ser-199, and Gln-289 contribute to the UDP-N-acetyl-alpha-D-glucosamine site.

Belongs to the glycosyltransferase 28 family. MurG subfamily.

The protein localises to the cell inner membrane. It catalyses the reaction di-trans,octa-cis-undecaprenyl diphospho-N-acetyl-alpha-D-muramoyl-L-alanyl-D-glutamyl-meso-2,6-diaminopimeloyl-D-alanyl-D-alanine + UDP-N-acetyl-alpha-D-glucosamine = di-trans,octa-cis-undecaprenyl diphospho-[N-acetyl-alpha-D-glucosaminyl-(1-&gt;4)]-N-acetyl-alpha-D-muramoyl-L-alanyl-D-glutamyl-meso-2,6-diaminopimeloyl-D-alanyl-D-alanine + UDP + H(+). Its pathway is cell wall biogenesis; peptidoglycan biosynthesis. Its function is as follows. Cell wall formation. Catalyzes the transfer of a GlcNAc subunit on undecaprenyl-pyrophosphoryl-MurNAc-pentapeptide (lipid intermediate I) to form undecaprenyl-pyrophosphoryl-MurNAc-(pentapeptide)GlcNAc (lipid intermediate II). The sequence is that of UDP-N-acetylglucosamine--N-acetylmuramyl-(pentapeptide) pyrophosphoryl-undecaprenol N-acetylglucosamine transferase from Borrelia hermsii (strain HS1 / DAH).